A 170-amino-acid chain; its full sequence is Peroxidase 2 (170 aa).

Asn-9 is a glycosylation site (N-linked (GlcNAc...) asparagine). His-24 contacts heme b. Thr-25 serves as a coordination point for Ca(2+). Cys-31 and Cys-59 are oxidised to a cystine. Residues Asp-73, Thr-76, and Asp-81 each coordinate Ca(2+).

The protein belongs to the peroxidase family. Classical plant (class III) peroxidase subfamily. Ca(2+) is required as a cofactor. The cofactor is heme b.

It carries out the reaction 2 a phenolic donor + H2O2 = 2 a phenolic radical donor + 2 H2O. Its function is as follows. Removal of H(2)O(2), oxidation of toxic reductants, biosynthesis and degradation of lignin, suberization, auxin catabolism, response to environmental stresses such as wounding, pathogen attack and oxidative stress. These functions might be dependent on each isozyme/isoform in each plant tissue. Functionally, involved in defense response to powdery meldew fungus. The protein is Peroxidase 2 of Hordeum vulgare (Barley).